A 153-amino-acid polypeptide reads, in one-letter code: L-alanine exporter AlaE (153 aa).

4 consecutive transmembrane segments (helical) span residues 16-36 (VAMVIYCFITGMAVEMLLSEM), 42-62 (LSSRLLSIPVNIVIAWPYGLY), 86-106 (LFAYVSFQSPVYAAILWAIGA), and 114-134 (AVGSNAIISMLMGVVYGYFLE).

Belongs to the AlaE exporter family.

The protein resides in the cell inner membrane. Functionally, exports L-alanine. The chain is L-alanine exporter AlaE from Musicola paradisiaca (strain Ech703) (Dickeya paradisiaca).